The following is a 283-amino-acid chain: Phosphate import ATP-binding protein PstB (283 aa).

Positions 1–20 (MAQTLAQTKQISQSHTFDVS) are enriched in polar residues. A disordered region spans residues 1–32 (MAQTLAQTKQISQSHTFDVSQSHHKTPDDTNS). The ABC transporter domain maps to 37-278 (YSTQNLDLWY…PSNKKTEDYI (242 aa)). 69-76 (GPSGCGKS) is an ATP binding site.

It belongs to the ABC transporter superfamily. Phosphate importer (TC 3.A.1.7) family. As to quaternary structure, the complex is composed of two ATP-binding proteins (PstB), two transmembrane proteins (PstC and PstA) and a solute-binding protein (PstS).

The protein resides in the cell membrane. The catalysed reaction is phosphate(out) + ATP + H2O = ADP + 2 phosphate(in) + H(+). In terms of biological role, part of the ABC transporter complex PstSACB involved in phosphate import. Responsible for energy coupling to the transport system. The polypeptide is Phosphate import ATP-binding protein PstB (Staphylococcus aureus (strain MRSA252)).